The primary structure comprises 116 residues: Large ribosomal subunit protein bL19 (116 aa).

Belongs to the bacterial ribosomal protein bL19 family.

Functionally, this protein is located at the 30S-50S ribosomal subunit interface and may play a role in the structure and function of the aminoacyl-tRNA binding site. The sequence is that of Large ribosomal subunit protein bL19 from Streptomyces avermitilis (strain ATCC 31267 / DSM 46492 / JCM 5070 / NBRC 14893 / NCIMB 12804 / NRRL 8165 / MA-4680).